The sequence spans 463 residues: Asparagine--tRNA ligase (463 aa).

It belongs to the class-II aminoacyl-tRNA synthetase family. Homodimer.

The protein resides in the cytoplasm. It carries out the reaction tRNA(Asn) + L-asparagine + ATP = L-asparaginyl-tRNA(Asn) + AMP + diphosphate + H(+). The chain is Asparagine--tRNA ligase from Alkaliphilus metalliredigens (strain QYMF).